The primary structure comprises 235 residues: 2-C-methyl-D-erythritol 4-phosphate cytidylyltransferase (235 aa).

It belongs to the IspD/TarI cytidylyltransferase family. IspD subfamily.

It catalyses the reaction 2-C-methyl-D-erythritol 4-phosphate + CTP + H(+) = 4-CDP-2-C-methyl-D-erythritol + diphosphate. It functions in the pathway isoprenoid biosynthesis; isopentenyl diphosphate biosynthesis via DXP pathway; isopentenyl diphosphate from 1-deoxy-D-xylulose 5-phosphate: step 2/6. In terms of biological role, catalyzes the formation of 4-diphosphocytidyl-2-C-methyl-D-erythritol from CTP and 2-C-methyl-D-erythritol 4-phosphate (MEP). The sequence is that of 2-C-methyl-D-erythritol 4-phosphate cytidylyltransferase from Pseudomonas fluorescens (strain Pf0-1).